Reading from the N-terminus, the 228-residue chain is LexA repressor (228 aa).

The H-T-H motif DNA-binding region spans 26–46 (FDEMKDALDLRSKSGIHRLIT). Active-site for autocatalytic cleavage activity residues include serine 149 and lysine 187.

The protein belongs to the peptidase S24 family. Homodimer.

The catalysed reaction is Hydrolysis of Ala-|-Gly bond in repressor LexA.. In terms of biological role, represses a number of genes involved in the response to DNA damage (SOS response), including recA and lexA. In the presence of single-stranded DNA, RecA interacts with LexA causing an autocatalytic cleavage which disrupts the DNA-binding part of LexA, leading to derepression of the SOS regulon and eventually DNA repair. This chain is LexA repressor, found in Cereibacter sphaeroides (strain ATCC 17025 / ATH 2.4.3) (Rhodobacter sphaeroides).